Consider the following 337-residue polypeptide: uncharacterized protein (337 aa).

A run of 2 helical transmembrane segments spans residues Phe-4–Ile-24 and Leu-26–Leu-46.

This sequence belongs to the plectrovirus ORF2 family.

Its subcellular location is the host membrane. This is an uncharacterized protein from Spiroplasma melliferum (SpV1).